We begin with the raw amino-acid sequence, 376 residues long: MAFCTSLGVMMETQLYIGIMSGTSMDGADAVLVRMDGGKWLGAEGHAFTPYPDRLRRKLLDLQDTGTDELHRSRMLSQELSRLYAQTAAELLCSQNLAPCDITALGCHGQTVRHAPEHGYSIQLADLPLLAELTRIFTVGDFRSRDLAAGGQGAPLVPAFHEALFRDDRETRVVLNIGGIANISVLPPGAPAFGFDTGPGNMLMDAWTQAHWQLPYDKNGAKAAQGNILPQLLGRLLAHPYFSQPHPKSTGRELFALNWLETYLDGGENRYDVLRTLSRFTAQTVCDAVSHAAADARQMYICGGGIRNPVLMADLAECFGTRVSLHSTAELNLDPQWVEAAAFAWLAACWINRIPGSPHKATGASKPCILGAGYYY.

Residue 22–29 (GTSMDGAD) coordinates ATP.

This sequence belongs to the anhydro-N-acetylmuramic acid kinase family.

The catalysed reaction is 1,6-anhydro-N-acetyl-beta-muramate + ATP + H2O = N-acetyl-D-muramate 6-phosphate + ADP + H(+). Its pathway is amino-sugar metabolism; 1,6-anhydro-N-acetylmuramate degradation. It functions in the pathway cell wall biogenesis; peptidoglycan recycling. Catalyzes the specific phosphorylation of 1,6-anhydro-N-acetylmuramic acid (anhMurNAc) with the simultaneous cleavage of the 1,6-anhydro ring, generating MurNAc-6-P. Is required for the utilization of anhMurNAc either imported from the medium or derived from its own cell wall murein, and thus plays a role in cell wall recycling. The sequence is that of Anhydro-N-acetylmuramic acid kinase from Neisseria gonorrhoeae (strain NCCP11945).